A 748-amino-acid chain; its full sequence is Formate acetyltransferase (748 aa).

Residues 5–618 enclose the PFL domain; it reads NNHTNAWQGF…KTGNTPDGRK (614 aa). The active-site S-acetylcysteine intermediate is Cys412. Cys413 (cysteine radical intermediate) is an active-site residue. The Glycine radical domain occupies 625–748; that stretch reads PGANPMHGRD…VISRTFHESM (124 aa). Gly723 carries the post-translational modification Glycine radical.

It belongs to the glycyl radical enzyme (GRE) family. PFL subfamily. In terms of assembly, homodimer.

Its subcellular location is the cytoplasm. The catalysed reaction is formate + acetyl-CoA = pyruvate + CoA. The protein operates within fermentation; pyruvate fermentation; formate from pyruvate: step 1/1. Functionally, catalyzes the conversion of pyruvate to formate and acetyl-CoA. The polypeptide is Formate acetyltransferase (pflB) (Staphylococcus epidermidis (strain ATCC 35984 / DSM 28319 / BCRC 17069 / CCUG 31568 / BM 3577 / RP62A)).